The primary structure comprises 279 residues: Putative pyruvate, phosphate dikinase regulatory protein (279 aa).

154-161 (GVSRTSKT) serves as a coordination point for ADP.

It belongs to the pyruvate, phosphate/water dikinase regulatory protein family. PDRP subfamily.

It carries out the reaction N(tele)-phospho-L-histidyl/L-threonyl-[pyruvate, phosphate dikinase] + ADP = N(tele)-phospho-L-histidyl/O-phospho-L-threonyl-[pyruvate, phosphate dikinase] + AMP + H(+). The enzyme catalyses N(tele)-phospho-L-histidyl/O-phospho-L-threonyl-[pyruvate, phosphate dikinase] + phosphate + H(+) = N(tele)-phospho-L-histidyl/L-threonyl-[pyruvate, phosphate dikinase] + diphosphate. Bifunctional serine/threonine kinase and phosphorylase involved in the regulation of the pyruvate, phosphate dikinase (PPDK) by catalyzing its phosphorylation/dephosphorylation. This is Putative pyruvate, phosphate dikinase regulatory protein from Rhodopseudomonas palustris (strain BisB18).